Reading from the N-terminus, the 268-residue chain is Embryonic abundant protein VF30.1 (268 aa).

An N-terminal signal peptide occupies residues 1–25 (MEFAHLTVLSLFCLAFVGITATSSG). The BURP domain maps to 68–259 (LFFEHDLHPG…GNKAAAWVPN (192 aa)). Residue Asn259 is glycosylated (N-linked (GlcNAc...) asparagine).

Seed.

Its subcellular location is the secreted. The polypeptide is Embryonic abundant protein VF30.1 (Vicia faba (Broad bean)).